The chain runs to 339 residues: MGSRGGSGGDGAESHGYAADIHSIREAQARIAPYVHKTPVLSSTSIDAIVGKQLFFKCECFQKAGAFKIRGASNSIFALDDDEASKGVVTHSSGNHAAAVALAAKLRGIPAYIVIPRNAPACKVDNVKRYGGHIIWSDVSIESRESVAKRVQEETGAILVHPFNNKNTISGQGTVSLELLEEVPEIDTIIVPISGGGLISGVALAAKAINPSIRILAAEPKGADDSAQSKAAGKIITLPSTNTIADGLRAFLGDLTWPVVRDLVDDIIVVDDNAIVDAMKMCYEMLKVAVEPSGAIGLAAALSDEFKQSSAWHESSKIGIIVSGGNVDLGVLWESLYKR.

Ser43 and Lys63 together coordinate ATP. The Proton acceptor role is filled by Lys68. Lys68 is subject to N6-(pyridoxal phosphate)lysine. Residue Thr90 coordinates Ca(2+). Ser93 functions as the Proton acceptor in the catalytic mechanism. Asn95 serves as a coordination point for pyridoxal 5'-phosphate. Cys122 bears the S-nitrosocysteine mark. Tyr130 contributes to the ATP binding site. Asp187 lines the Mg(2+) pocket. Positions 195, 196, and 197 each coordinate pyridoxal 5'-phosphate. Residues Glu219, Ala223, and Asp225 each contribute to the Ca(2+) site. Mg(2+) is bound by residues Glu219, Ala223, and Asp225. Glu219, Ala223, and Asp225 together coordinate Mn(2+). Residue Lys287 participates in ATP binding. Position 323 (Ser323) interacts with pyridoxal 5'-phosphate. ATP is bound at residue Asn326.

The protein belongs to the serine/threonine dehydratase family. Requires Mg(2+) as cofactor. Mn(2+) is required as a cofactor. Ca(2+) serves as cofactor. It depends on pyridoxal 5'-phosphate as a cofactor.

The catalysed reaction is L-serine = D-serine. The enzyme catalyses L-serine = pyruvate + NH4(+). It catalyses the reaction D-serine = pyruvate + NH4(+). In terms of biological role, catalyzes the synthesis of D-serine from L-serine. Has dehydratase activity towards both L-serine and D-serine. This Oryza sativa subsp. indica (Rice) protein is Serine racemase.